The primary structure comprises 150 residues: 3-dehydroquinate dehydratase (150 aa).

Tyr26 (proton acceptor) is an active-site residue. Residues Asn77, His83, and Asp90 each coordinate substrate. The Proton donor role is filled by His103. Residues 104-105 and Arg114 contribute to the substrate site; that span reads LS.

Belongs to the type-II 3-dehydroquinase family. In terms of assembly, homododecamer.

The enzyme catalyses 3-dehydroquinate = 3-dehydroshikimate + H2O. It functions in the pathway metabolic intermediate biosynthesis; chorismate biosynthesis; chorismate from D-erythrose 4-phosphate and phosphoenolpyruvate: step 3/7. Its function is as follows. Catalyzes a trans-dehydration via an enolate intermediate. This Pseudoalteromonas translucida (strain TAC 125) protein is 3-dehydroquinate dehydratase.